A 268-amino-acid chain; its full sequence is Tryptophan synthase alpha chain (268 aa).

Active-site proton acceptor residues include E49 and D60.

The protein belongs to the TrpA family. As to quaternary structure, tetramer of two alpha and two beta chains.

It catalyses the reaction (1S,2R)-1-C-(indol-3-yl)glycerol 3-phosphate + L-serine = D-glyceraldehyde 3-phosphate + L-tryptophan + H2O. It functions in the pathway amino-acid biosynthesis; L-tryptophan biosynthesis; L-tryptophan from chorismate: step 5/5. In terms of biological role, the alpha subunit is responsible for the aldol cleavage of indoleglycerol phosphate to indole and glyceraldehyde 3-phosphate. The polypeptide is Tryptophan synthase alpha chain (Haemophilus influenzae (strain ATCC 51907 / DSM 11121 / KW20 / Rd)).